Here is an 802-residue protein sequence, read N- to C-terminus: Lon protease (802 aa).

Residues 21-215 (LPLLPVRDII…KIIQILNAEI (195 aa)) form the Lon N-terminal domain. ATP is bound at residue 367 to 374 (GPPGVGKT). Residues 603–784 (ENDVGVATGL…DEVISLTIER (182 aa)) form the Lon proteolytic domain. Active-site residues include S690 and K733.

Belongs to the peptidase S16 family. In terms of assembly, homohexamer. Organized in a ring with a central cavity.

The protein resides in the cytoplasm. It carries out the reaction Hydrolysis of proteins in presence of ATP.. ATP-dependent serine protease that mediates the selective degradation of mutant and abnormal proteins as well as certain short-lived regulatory proteins. Required for cellular homeostasis and for survival from DNA damage and developmental changes induced by stress. Degrades polypeptides processively to yield small peptide fragments that are 5 to 10 amino acids long. Binds to DNA in a double-stranded, site-specific manner. This chain is Lon protease, found in Endomicrobium trichonymphae.